Consider the following 441-residue polypeptide: Nuclear distribution protein nudF (441 aa).

The LisH domain maps to 9–41 (QAEELHKSIIAYLASVNLTESSAALRAELGDSV). WD repeat units lie at residues 87 to 128 (GHRE…RTVK), 130 to 170 (HTKA…KNIR), 174 to 221 (GHDH…CVKT), 224 to 263 (GHVDWVRAVAPSLDGRFLFAAGDDRIPRLWDLSSAETKST), 266 to 326 (GHEH…IKTL), 328 to 367 (GHDNWVRALAFHPGGKHLLSVADDKTIRCWDLTQECKCVR), 372 to 402 (AHGHFVTCLRWAPPLIKDGGANGESETNGAP), and 403 to 440 (AATATTNGVRPDPNAANKISIRCVIATGSVDRKVRIFA). The tract at residues 390–415 (GGANGESETNGAPAATATTNGVRPDP) is disordered. Low complexity predominate over residues 398-410 (TNGAPAATATTNG).

Belongs to the WD repeat LIS1/nudF family. Self-associates. Interacts with nudE and dynein.

The protein localises to the cytoplasm. It is found in the cytoskeleton. Its subcellular location is the spindle pole. Positively regulates the activity of the minus-end directed microtubule motor protein dynein. May enhance dynein-mediated microtubule sliding by targeting dynein to the microtubule plus end. Required for nuclear migration during vegetative growth as well as development. Required for retrograde early endosome (EE) transport from the hyphal tip. Required for localization of dynein to the mitotic spindle poles. Recruits additional proteins to the dynein complex at SPBs. The sequence is that of Nuclear distribution protein nudF from Neosartorya fischeri (strain ATCC 1020 / DSM 3700 / CBS 544.65 / FGSC A1164 / JCM 1740 / NRRL 181 / WB 181) (Aspergillus fischerianus).